The sequence spans 286 residues: Protein MGF 360-3L (286 aa).

Residues 1 to 17 (MKVLLELLLGYSVLILA) form a helical membrane-spanning segment. The N-linked (GlcNAc...) asparagine; by host glycan is linked to Asn61. Helical transmembrane passes span 128-148 (HCCF…FVYN) and 153-173 (LNTT…SQPA). 2 N-linked (GlcNAc...) asparagine; by host glycosylation sites follow: Asn238 and Asn263.

The protein belongs to the asfivirus MGF 110 family.

It localises to the host membrane. Functionally, plays a role in virus cell tropism, and may be required for efficient virus replication in macrophages. The protein is Protein MGF 360-3L of African swine fever virus (isolate Tick/Malawi/Lil 20-1/1983) (ASFV).